The chain runs to 210 residues: Probable nicotinate-nucleotide adenylyltransferase (210 aa).

Belongs to the NadD family.

It carries out the reaction nicotinate beta-D-ribonucleotide + ATP + H(+) = deamido-NAD(+) + diphosphate. The protein operates within cofactor biosynthesis; NAD(+) biosynthesis; deamido-NAD(+) from nicotinate D-ribonucleotide: step 1/1. Functionally, catalyzes the reversible adenylation of nicotinate mononucleotide (NaMN) to nicotinic acid adenine dinucleotide (NaAD). The sequence is that of Probable nicotinate-nucleotide adenylyltransferase from Streptococcus mutans serotype c (strain ATCC 700610 / UA159).